A 127-amino-acid chain; its full sequence is PanD regulatory factor (127 aa).

Residues 1–127 enclose the N-acetyltransferase domain; it reads MKLTILRLEH…TAQHDGWEKR (127 aa). CoA is bound by residues 66-68 and 72-79; these read LRV and TRRRGVGQ.

The protein belongs to the PanZ/PanM family. As to quaternary structure, interacts with PanD in the presence of CoA. Monomer.

In terms of biological role, controls both the activation and catalytic activity of PanD in a coenzyme A (CoA)-dependent fashion. Binding of CoA or a derivative to PanM leads to interaction with PanD, which promotes the processing and activation of pro-PanD, and subsequent substrate-mediated inhibition of the active form of PanD. Lacks acetyltransferase activity. This chain is PanD regulatory factor, found in Salmonella typhimurium (strain LT2 / SGSC1412 / ATCC 700720).